Reading from the N-terminus, the 57-residue chain is Sec-independent protein translocase protein TatAy (57 aa).

A helical transmembrane segment spans residues 1–21 (MPIGPGSLAVIAIVALIIFGP).

It belongs to the TatA/E family. As to quaternary structure, forms a complex with TatCy. Two types of complexes exist: one composed of TatAy and TatCy, and another composed only of TatAy. Cytosolic TatA forms large complexes or aggregates.

It localises to the cell membrane. The protein resides in the cytoplasm. Its subcellular location is the cytosol. Its function is as follows. Part of the twin-arginine translocation (Tat) system that transports large folded proteins containing a characteristic twin-arginine motif in their signal peptide across membranes. TatA could form the protein-conducting channel of the Tat system. Required for YwbN secretion. This is Sec-independent protein translocase protein TatAy from Bacillus subtilis (strain 168).